Reading from the N-terminus, the 201-residue chain is Flavin prenyltransferase UbiX (201 aa).

Residues 23–25, serine 49, 103–106, and arginine 138 contribute to the FMN site; these read GAS and SIKT. Dimethylallyl phosphate-binding residues include tyrosine 168 and lysine 184.

It belongs to the UbiX/PAD1 family.

The enzyme catalyses dimethylallyl phosphate + FMNH2 = prenylated FMNH2 + phosphate. Functionally, flavin prenyltransferase that catalyzes the synthesis of the prenylated FMN cofactor (prenyl-FMN) for 4-hydroxy-3-polyprenylbenzoic acid decarboxylase UbiD. The prenyltransferase is metal-independent and links a dimethylallyl moiety from dimethylallyl monophosphate (DMAP) to the flavin N5 and C6 atoms of FMN. The sequence is that of Flavin prenyltransferase UbiX from Saccharolobus solfataricus (strain ATCC 35092 / DSM 1617 / JCM 11322 / P2) (Sulfolobus solfataricus).